The primary structure comprises 155 residues: Gas vesicle protein K (155 aa).

Belongs to the gas vesicle GvpK family.

The protein resides in the gas vesicle. Might be involved in nucleating gas vesicle formation. Gas vesicles (GV) are hollow, gas filled proteinaceous nanostructures. During planktonic growth they allow positioning of the organism at a favorable depth for light or nutrient acquisition. This is Gas vesicle protein K from Dolichospermum flosaquae (Anabaena flos-aquae).